The sequence spans 186 residues: NADH-quinone oxidoreductase subunit B (186 aa).

Cys-44, Cys-45, Cys-110, and Cys-139 together coordinate [4Fe-4S] cluster.

It belongs to the complex I 20 kDa subunit family. As to quaternary structure, NDH-1 is composed of 14 different subunits. Subunits NuoB, C, D, E, F, and G constitute the peripheral sector of the complex. It depends on [4Fe-4S] cluster as a cofactor.

The protein resides in the cell inner membrane. The enzyme catalyses a quinone + NADH + 5 H(+)(in) = a quinol + NAD(+) + 4 H(+)(out). Functionally, NDH-1 shuttles electrons from NADH, via FMN and iron-sulfur (Fe-S) centers, to quinones in the respiratory chain. The immediate electron acceptor for the enzyme in this species is believed to be ubiquinone. Couples the redox reaction to proton translocation (for every two electrons transferred, four hydrogen ions are translocated across the cytoplasmic membrane), and thus conserves the redox energy in a proton gradient. The sequence is that of NADH-quinone oxidoreductase subunit B from Leptospira biflexa serovar Patoc (strain Patoc 1 / Ames).